The primary structure comprises 188 residues: UPF0200 protein M164_1169 (188 aa).

15 to 22 contributes to the ATP binding site; that stretch reads GMPGSGKS.

This sequence belongs to the UPF0200 family.

In Saccharolobus islandicus (strain M.16.4 / Kamchatka #3) (Sulfolobus islandicus), this protein is UPF0200 protein M164_1169.